We begin with the raw amino-acid sequence, 375 residues long: MPVRRHILEDLHRSLGATFGEFAGWSVPMSYEGTLKEHMAVRREAGIFDISHMGRMIVSGEGATELLERIYTKRVSKTKVGFMSGPTLALNEYARVKDDEMPYRLGEEEWLIVPNAAVADAMLEYFSSIASSMGLNVSIRDLRERYALLALQGPGAARVMEEMGGGDLLDLKPLQFRENAGIAGVTAYIVSRSGWTGEDGFEIIAEVEAAKRIFKAAVEAGAKPAGIAARDTLRIEAGFVLGGHEYGEDPLRWPCAVSLRYGLGAIDWGKKGFVGEAALRACRREGVRWIRVGLVMKKKYARMIPRSGYRLYVDDVDVGWVTSGTFSPVIGRGVAQAYIDSRYAYIGDTIEVDVRGKRGEARLQEFPLVPLGSRG.

The protein belongs to the GcvT family. In terms of assembly, the glycine cleavage system is composed of four proteins: P, T, L and H.

The enzyme catalyses N(6)-[(R)-S(8)-aminomethyldihydrolipoyl]-L-lysyl-[protein] + (6S)-5,6,7,8-tetrahydrofolate = N(6)-[(R)-dihydrolipoyl]-L-lysyl-[protein] + (6R)-5,10-methylene-5,6,7,8-tetrahydrofolate + NH4(+). The glycine cleavage system catalyzes the degradation of glycine. This Aeropyrum pernix (strain ATCC 700893 / DSM 11879 / JCM 9820 / NBRC 100138 / K1) protein is Probable aminomethyltransferase.